Here is a 461-residue protein sequence, read N- to C-terminus: Cysteine--tRNA ligase (461 aa).

Residue C30 coordinates Zn(2+). The short motif at 32-42 is the 'HIGH' region element; the sequence is VTIYDLCHIGH. Zn(2+) contacts are provided by C211, H236, and E240. Positions 268 to 272 match the 'KMSKS' region motif; sequence KMSKS. K271 is an ATP binding site.

It belongs to the class-I aminoacyl-tRNA synthetase family. Monomer. Zn(2+) serves as cofactor.

The protein localises to the cytoplasm. The enzyme catalyses tRNA(Cys) + L-cysteine + ATP = L-cysteinyl-tRNA(Cys) + AMP + diphosphate. In Shewanella sp. (strain W3-18-1), this protein is Cysteine--tRNA ligase.